A 232-amino-acid polypeptide reads, in one-letter code: RNA chaperone ProQ (232 aa).

The disordered stretch occupies residues 105–182; that stretch reads EAKARVQAQR…REEQHTPVSD (78 aa). A compositionally biased stretch (basic and acidic residues) spans 117-136; that stretch reads QQAKKREAAAAAGEKEDAPR. A compositionally biased stretch (basic residues) spans 137 to 146; sequence RERKPRPTTP. Basic and acidic residues predominate over residues 147–177; that stretch reads RRKEGAERKPRAQKSVEKAPKTVKAPREEQH.

The protein belongs to the ProQ family.

The protein localises to the cytoplasm. Its function is as follows. RNA chaperone with significant RNA binding, RNA strand exchange and RNA duplexing activities. May regulate ProP activity through an RNA-based, post-transcriptional mechanism. The polypeptide is RNA chaperone ProQ (Escherichia coli O7:K1 (strain IAI39 / ExPEC)).